Consider the following 409-residue polypeptide: Peptidase T (409 aa).

H78 serves as a coordination point for Zn(2+). Residue D80 is part of the active site. D140 is a binding site for Zn(2+). The Proton acceptor role is filled by E174. Zn(2+) is bound by residues E175, D197, and H379.

This sequence belongs to the peptidase M20B family. Zn(2+) serves as cofactor.

It localises to the cytoplasm. The catalysed reaction is Release of the N-terminal residue from a tripeptide.. Cleaves the N-terminal amino acid of tripeptides. The polypeptide is Peptidase T (Aliivibrio salmonicida (strain LFI1238) (Vibrio salmonicida (strain LFI1238))).